The chain runs to 95 residues: Aspartyl/glutamyl-tRNA(Asn/Gln) amidotransferase subunit C (95 aa).

It belongs to the GatC family. In terms of assembly, heterotrimer of A, B and C subunits.

It carries out the reaction L-glutamyl-tRNA(Gln) + L-glutamine + ATP + H2O = L-glutaminyl-tRNA(Gln) + L-glutamate + ADP + phosphate + H(+). The catalysed reaction is L-aspartyl-tRNA(Asn) + L-glutamine + ATP + H2O = L-asparaginyl-tRNA(Asn) + L-glutamate + ADP + phosphate + 2 H(+). In terms of biological role, allows the formation of correctly charged Asn-tRNA(Asn) or Gln-tRNA(Gln) through the transamidation of misacylated Asp-tRNA(Asn) or Glu-tRNA(Gln) in organisms which lack either or both of asparaginyl-tRNA or glutaminyl-tRNA synthetases. The reaction takes place in the presence of glutamine and ATP through an activated phospho-Asp-tRNA(Asn) or phospho-Glu-tRNA(Gln). This Caulobacter sp. (strain K31) protein is Aspartyl/glutamyl-tRNA(Asn/Gln) amidotransferase subunit C.